Here is a 72-residue protein sequence, read N- to C-terminus: C-hordein (72 aa).

Over residues 1-36 (FPQPQEPFPQQPQQPFPLQPQQPFPQQPQQPFPQPQ) the composition is skewed to pro residues. The disordered stretch occupies residues 1–61 (FPQPQEPFPQ…QQPFPLQPHQ (61 aa)). The span at 37–50 (QPFRQQAELIIPQQ) shows a compositional bias: low complexity.

In terms of tissue distribution, developing endosperm.

Functionally, sulfur-poor seed storage protein. This is C-hordein from Hordeum vulgare (Barley).